The following is a 364-amino-acid chain: Pectinesterase (364 aa).

Positions 1–22 are cleaved as a signal peptide; that stretch reads MSCIAVEAVLLGILLYIPIVLS. N-linked (GlcNAc...) asparagine glycosylation is present at Asn-103. Residue Asp-220 is part of the active site.

The protein localises to the secreted. The enzyme catalyses [(1-&gt;4)-alpha-D-galacturonosyl methyl ester](n) + n H2O = [(1-&gt;4)-alpha-D-galacturonosyl](n) + n methanol + n H(+). Its pathway is glycan metabolism; pectin degradation; 2-dehydro-3-deoxy-D-gluconate from pectin: step 1/5. Functionally, catalyzes the demethylesterification of homogalacturonan components of pectin. This chain is Pectinesterase, found in Parthenium hysterophorus (Santa Maria feverfew).